Reading from the N-terminus, the 515-residue chain is ATP synthase subunit alpha (515 aa).

169-176 is a binding site for ATP; the sequence is GDRQTGKT.

This sequence belongs to the ATPase alpha/beta chains family. F-type ATPases have 2 components, CF(1) - the catalytic core - and CF(0) - the membrane proton channel. CF(1) has five subunits: alpha(3), beta(3), gamma(1), delta(1), epsilon(1). CF(0) has three main subunits: a(1), b(2) and c(9-12). The alpha and beta chains form an alternating ring which encloses part of the gamma chain. CF(1) is attached to CF(0) by a central stalk formed by the gamma and epsilon chains, while a peripheral stalk is formed by the delta and b chains.

It localises to the cell inner membrane. The catalysed reaction is ATP + H2O + 4 H(+)(in) = ADP + phosphate + 5 H(+)(out). Its function is as follows. Produces ATP from ADP in the presence of a proton gradient across the membrane. The alpha chain is a regulatory subunit. This chain is ATP synthase subunit alpha, found in Neisseria meningitidis serogroup C (strain 053442).